We begin with the raw amino-acid sequence, 412 residues long: 5,5'-dehydrodivanillate O-demethylase ferredoxin reductase subunit (412 aa).

Residues alanine 14, lysine 49, valine 82, arginine 130, aspartate 279, and valine 298 each coordinate FAD.

It belongs to the FAD-dependent oxidoreductase family. In terms of assembly, monomer. The three-component monooxygenase is composed of an oxygenase (LigXa), a ferredoxin (LigXc) and a ferredoxin reductase (LigXd). The cofactor is FAD.

It carries out the reaction 5,5'-dehydrodivanillate + NADH + O2 + H(+) = 2,2',3-trihydroxy-3'-methoxy-5,5'-dicarboxybiphenyl + formaldehyde + NAD(+) + H2O. In terms of biological role, involved in the catabolism of 5,5'-dehydrodivanillate (DDVA), an intermediate in the biodegradation of lignin. Part of a three-component monooxygenase that catalyzes the O-demethylation of DDVA, leading to the formation of 2,2',3-trihydroxy-3'-methoxy-5,5'-dicarboxybiphenyl (OH-DDVA). LigXd probably transfers the electrons from NADH to LigXc. The protein is 5,5'-dehydrodivanillate O-demethylase ferredoxin reductase subunit of Sphingobium sp. (strain NBRC 103272 / SYK-6).